Consider the following 463-residue polypeptide: Glutamate--tRNA ligase 1 (463 aa).

Positions 10–20 match the 'HIGH' region motif; sequence PSPTGYLHIGG. The 'KMSKS' region motif lies at 238 to 242; sequence KLSKR. Lys-241 is an ATP binding site.

Belongs to the class-I aminoacyl-tRNA synthetase family. Glutamate--tRNA ligase type 1 subfamily. As to quaternary structure, monomer.

Its subcellular location is the cytoplasm. It carries out the reaction tRNA(Glu) + L-glutamate + ATP = L-glutamyl-tRNA(Glu) + AMP + diphosphate. In terms of biological role, catalyzes the attachment of glutamate to tRNA(Glu) in a two-step reaction: glutamate is first activated by ATP to form Glu-AMP and then transferred to the acceptor end of tRNA(Glu). This is Glutamate--tRNA ligase 1 from Helicobacter pylori (strain ATCC 700392 / 26695) (Campylobacter pylori).